The following is a 200-amino-acid chain: Charged multivesicular body protein 6 (200 aa).

Gly2 carries N-myristoyl glycine lipidation. Residues 10–145 adopt a coiled-coil conformation; sequence QSRVTEQDRA…YQRQIDELLA (136 aa). Ser119 bears the Phosphoserine mark. The residue at position 130 (Thr130) is a Phosphothreonine. The Type-2 MIT-interacting motif signature appears at 168–179; that stretch reads MELPEVPSEPLP. Residues 168–200 form a disordered region; it reads MELPEVPSEPLPDRNPEAPAKARSRQAELVAAS.

This sequence belongs to the SNF7 family. Probable core component of the endosomal sorting required for transport complex III (ESCRT-III). ESCRT-III components are thought to multimerize to form a flat lattice on the perimeter membrane of the endosome. Several assembly forms of ESCRT-III may exist that interact and act sequentially. Interacts with VPS4A; the interaction is direct. Interacts with VPS4B; the interaction is direct. Interacts with CHMP4A, CHMP4B and CHMP4C. Interacts with SNF8, VPS25 and VPS36. Post-translationally, ISGylated in a CHMP5-dependent manner. Isgylation weakens its interaction with VPS4A.

The protein resides in the endomembrane system. The protein localises to the endosome membrane. Its subcellular location is the late endosome membrane. It localises to the membrane. Functionally, probable core component of the endosomal sorting required for transport complex III (ESCRT-III) which is involved in multivesicular bodies (MVBs) formation and sorting of endosomal cargo proteins into MVBs. MVBs contain intraluminal vesicles (ILVs) that are generated by invagination and scission from the limiting membrane of the endosome and mostly are delivered to lysosomes enabling degradation of membrane proteins, such as stimulated growth factor receptors, lysosomal enzymes and lipids. The MVB pathway appears to require the sequential function of ESCRT-O, -I,-II and -III complexes. ESCRT-III proteins mostly dissociate from the invaginating membrane before the ILV is released. The ESCRT machinery also functions in topologically equivalent membrane fission events, such as the terminal stages of cytokinesis. ESCRT-III proteins are believed to mediate the necessary vesicle extrusion and/or membrane fission activities, possibly in conjunction with the AAA ATPase VPS4. In the ESCRT-III complex, it probably serves as an acceptor for the ESCRT-II complex on endosomal membranes. In Mus musculus (Mouse), this protein is Charged multivesicular body protein 6 (Chmp6).